Consider the following 352-residue polypeptide: Ly6/PLAUR domain-containing protein 3 (352 aa).

The signal sequence occupies residues 1–32; it reads MDAARRGDTQPVMWTTRWLLLLPLLLCEGAQA. Residues 35–128 form the UPAR/Ly6 1 domain; the sequence is CYSCVQKADD…LNLTLRGLNP (94 aa). N-linked (GlcNAc...) asparagine glycans are attached at residues N120, N131, N178, and N185. Residues 142–224 enclose the UPAR/Ly6 2 domain; that stretch reads CYSCMGLSRE…GSCCQGPRCN (83 aa). A compositionally biased stretch (pro residues) spans 236–249; the sequence is RIPPLVLLPPPTTP. A disordered region spans residues 236–330; it reads RIPPLVLLPP…KGGAQIPSKG (95 aa). The segment covering 250-285 has biased composition (low complexity); sequence APSTRTQNSSSTTSTTAPTTATTTIKPTTVQASHTS. Composition is skewed to basic and acidic residues over residues 286–300 and 309–320; these read STHE…EEGS and HQDRSNMGKFPE. Residue G330 is the site of GPI-anchor amidated glycine attachment. A propeptide spans 331–352 (removed in mature form); the sequence is GSDALGSWLSAILLTVVAGAML.

In terms of assembly, interacts with AGR2 and AGR3. Binds laminin-1 and laminin-5. Interacts with LGALS3. As to expression, found predominantly on the basal layers of squamous epithelium. Expressed in the gravid uterus and on epithelial of the upper gastrointestinal tract. It has been found in tumor lines which metastasize via the lymphatic system.

Its subcellular location is the cell membrane. In terms of biological role, supports cell migration. May be involved in tumor progression. The sequence is that of Ly6/PLAUR domain-containing protein 3 (Lypd3) from Rattus norvegicus (Rat).